The sequence spans 351 residues: Spermidine/putrescine import ATP-binding protein PotA (351 aa).

The ABC transporter domain maps to 6–236; it reads LELRNVTKEY…PENAWVANFI (231 aa). An ATP-binding site is contributed by 38–45; the sequence is GPSGCGKT.

This sequence belongs to the ABC transporter superfamily. Spermidine/putrescine importer (TC 3.A.1.11.1) family. The complex is composed of two ATP-binding proteins (PotA), two transmembrane proteins (PotB and PotC) and a solute-binding protein (PotD).

It localises to the cell membrane. It carries out the reaction ATP + H2O + polyamine-[polyamine-binding protein]Side 1 = ADP + phosphate + polyamineSide 2 + [polyamine-binding protein]Side 1.. Its function is as follows. Part of the ABC transporter complex PotABCD involved in spermidine/putrescine import. Responsible for energy coupling to the transport system. The polypeptide is Spermidine/putrescine import ATP-binding protein PotA (Mycoplasma mycoides subsp. mycoides SC (strain CCUG 32753 / NCTC 10114 / PG1)).